We begin with the raw amino-acid sequence, 296 residues long: Urease accessory protein UreD (296 aa).

It belongs to the UreD family. UreD, UreF and UreG form a complex that acts as a GTP-hydrolysis-dependent molecular chaperone, activating the urease apoprotein by helping to assemble the nickel containing metallocenter of UreC. The UreE protein probably delivers the nickel.

It is found in the cytoplasm. Required for maturation of urease via the functional incorporation of the urease nickel metallocenter. This chain is Urease accessory protein UreD, found in Nitrosococcus oceani (strain ATCC 19707 / BCRC 17464 / JCM 30415 / NCIMB 11848 / C-107).